The following is a 528-amino-acid chain: GMP synthase [glutamine-hydrolyzing] (528 aa).

Residues 13–204 form the Glutamine amidotransferase type-1 domain; that stretch reads AIVILDFGSQ…VYDICSCEPD (192 aa). Catalysis depends on Cys-90, which acts as the Nucleophile. Active-site residues include His-178 and Glu-180. In terms of domain architecture, GMPS ATP-PPase spans 205–403; sequence WTTNLFIDEA…LGLPDEIVRR (199 aa). 232-238 contacts ATP; the sequence is SGGVDSS.

In terms of assembly, homodimer.

The catalysed reaction is XMP + L-glutamine + ATP + H2O = GMP + L-glutamate + AMP + diphosphate + 2 H(+). The protein operates within purine metabolism; GMP biosynthesis; GMP from XMP (L-Gln route): step 1/1. Its function is as follows. Catalyzes the synthesis of GMP from XMP. This Prochlorococcus marinus (strain NATL2A) protein is GMP synthase [glutamine-hydrolyzing].